An 832-amino-acid polypeptide reads, in one-letter code: Leucine--tRNA ligase (832 aa).

Residues 58–68 (PYPSGDLHMGH) carry the 'HIGH' region motif. The short motif at 598-602 (AMSKS) is the 'KMSKS' region element. Residue lysine 601 participates in ATP binding.

This sequence belongs to the class-I aminoacyl-tRNA synthetase family.

It localises to the cytoplasm. It carries out the reaction tRNA(Leu) + L-leucine + ATP = L-leucyl-tRNA(Leu) + AMP + diphosphate. The polypeptide is Leucine--tRNA ligase (Acidothermus cellulolyticus (strain ATCC 43068 / DSM 8971 / 11B)).